The sequence spans 932 residues: MYKIKHSFNKTLIAISISSFLSIAYATESIENPQPIIQLSESLSSKYSGKGVKLGVMDEGFMVKHPRHSSHLHPLIHQLTTPEGEVRIYDASYPQFEVNPVEKEDGIDLIPSLETHGAGVAGIIAAQADKTLGDGYSGGIAKGAELYVATKSYKRTLEKVIQDAKKELENAKDEEDEKTPSLDQMAKNDLLASKEKEMAIERAEWASGLNKLLDNNVFAINNSWNPFSISDDINVVDKFYQSIKQNKHNPLLQAIMRAKNSNTLLVFAAGNESKKQPGVMALLPRYFPELEKNLISAVAVDKEQKIASYSNHCGASKNWCVAAPGDLHVLIGVADEHKKPQYGLTKEQGTSFSAPAITASLAVLKERFDYLTATQIRDTLLTTATDLGEKGVDNVYGWGLINLKKAVNGPTQFLNDETITVTRDDHWSNPLASQFKITKKGDKSLHLDGENHLDTVAVEEGRLALNGKTKVKTISNHANLAVNGTEVEQNYSSSGQSQLEVLGKSGLIANAQANIHLAGSLKIDDKLTEKTEAGDVSATVVQLKDKATYQGGFTQLVENENLAKRGLIQDLYFKESEIIAKVNKPLTDEKADTNGQAGLALLNALRTTPIAYRRSWYNGWLQSALEQRKLDNLHYAVSNNIYADSLELLRSQNRKGLTQAQQHLFTAYHTPLQTTVWAEHLNQKQSASSKHTDVKHHQSQLGVNHKLADKTVLSATLSQQKNRLEKPFAQATLKQTALNIGLRYHLDNAWFSEATLQFARQKYQQSRRFASHQLGTAETRGSTLGGEMRIGYQFMPNQWIIEPSLGVQWIQTKMNGLNESGELATQTAAMRYRDVNIVPSVKLQRTFQLEQGSISPYIGLNYLHRLNGKITKITSNIAGKTLHSEATTKRNRQLNGEVGVKLHYKNWFTAMNLDYSRVKSCKPIWLESKCWL.

Positions 1 to 24 (MYKIKHSFNKTLIAISISSFLSIA) are cleaved as a signal peptide. Residues 25–407 (YATESIENPQ…WGLINLKKAV (383 aa)) form the Peptidase S8 domain. Active-site charge relay system residues include Asp-58, His-116, and Ser-351. In terms of domain architecture, Autotransporter spans 669–932 (HTPLQTTVWA…PIWLESKCWL (264 aa)).

It belongs to the peptidase S8 family.

It is found in the cell outer membrane. This Mannheimia haemolytica (Pasteurella haemolytica) protein is Serotype-specific antigen 1 (ssa1).